The sequence spans 434 residues: 5'-deoxyadenosine deaminase (434 aa).

Residues His63 and His65 each contribute to the Zn(2+) site. Residues Glu92 and His184 each coordinate substrate. His211 is a binding site for Zn(2+). Glu214 and Asp299 together coordinate substrate. Asp299 contributes to the Zn(2+) binding site.

This sequence belongs to the metallo-dependent hydrolases superfamily. MTA/SAH deaminase family. In terms of assembly, homotetramer. Zn(2+) serves as cofactor.

It carries out the reaction 5'-deoxyadenosine + H2O + H(+) = 5'-deoxyinosine + NH4(+). The enzyme catalyses S-adenosyl-L-homocysteine + H2O + H(+) = S-inosyl-L-homocysteine + NH4(+). The catalysed reaction is S-methyl-5'-thioadenosine + H2O + H(+) = S-methyl-5'-thioinosine + NH4(+). It catalyses the reaction adenosine + H2O + H(+) = inosine + NH4(+). It functions in the pathway amino-acid biosynthesis; S-adenosyl-L-methionine biosynthesis. Functionally, catalyzes the deamination of three SAM-derived enzymatic products, namely 5'-deoxyadenosine, S-adenosyl-L-homocysteine, and 5'-methylthioadenosine, to produce the inosine analogs. Can also deaminate adenosine. The preferred substrate for this enzyme is 5'-deoxyadenosine, but all these substrates are efficiently deaminated. Likely functions in a S-adenosyl-L-methionine (SAM) recycling pathway from S-adenosyl-L-homocysteine (SAH) produced from SAM-dependent methylation reactions. May also be involved in the recycling of 5'-deoxyadenosine, whereupon the 5'-deoxyribose moiety of 5'-deoxyinosine is further metabolized to deoxyhexoses used for the biosynthesis of aromatic amino acids in methanogens. The polypeptide is 5'-deoxyadenosine deaminase (Methanococcoides burtonii (strain DSM 6242 / NBRC 107633 / OCM 468 / ACE-M)).